A 141-amino-acid chain; its full sequence is Cytochrome c-type biogenesis protein CcmE (141 aa).

The Cytoplasmic portion of the chain corresponds to 1 to 7 (MRARTRR). Residues 8–28 (LYTFGIAAALIVAAAALAFFA) traverse the membrane as a helical; Signal-anchor for type II membrane protein segment. At 29-141 (LRENANLFYT…RELKPLEAGG (113 aa)) the chain is on the periplasmic side. Heme-binding residues include His-125 and Tyr-129.

It belongs to the CcmE/CycJ family.

Its subcellular location is the cell inner membrane. Functionally, heme chaperone required for the biogenesis of c-type cytochromes. Transiently binds heme delivered by CcmC and transfers the heme to apo-cytochromes in a process facilitated by CcmF and CcmH. This Hyphomonas neptunium (strain ATCC 15444) protein is Cytochrome c-type biogenesis protein CcmE.